Consider the following 277-residue polypeptide: Inorganic pyrophosphatase (277 aa).

Arg-80 provides a ligand contact to diphosphate. Asp-117, Asp-122, and Asp-154 together coordinate Mg(2+).

The protein belongs to the PPase family. The cofactor is Mg(2+).

The protein resides in the cytoplasm. The enzyme catalyses diphosphate + H2O = 2 phosphate + H(+). Functionally, involved in osmoadaptation. The sequence is that of Inorganic pyrophosphatase (IPP1) from Encephalitozoon cuniculi (strain GB-M1) (Microsporidian parasite).